A 690-amino-acid polypeptide reads, in one-letter code: Secreted LysM effector Vd5LysM (690 aa).

Residues asparagine 4 and asparagine 69 are each glycosylated (N-linked (GlcNAc...) asparagine). LysM domains are found at residues 203 to 248, 253 to 301, and 341 to 387; these read TQYT…SLCI, DTVT…TLCI, and RWYN…SYCV. N-linked (GlcNAc...) asparagine glycosylation is found at asparagine 260, asparagine 295, asparagine 375, asparagine 410, asparagine 423, and asparagine 492. The tract at residues 523–546 is disordered; that stretch reads PATATTGDGGPTPPAPTHSGQPQD. A LysM 4 domain is found at 549-596; sequence TWHVVSSGDSCQSVADDAGISRDQFHDWNPAVGRDCSTNFWLGQAYCV. A compositionally biased stretch (low complexity) spans 606 to 619; sequence STVASSTTSSVTPG. The interval 606–636 is disordered; that stretch reads STVASSTTSSVTPGPSKPEPPGPTHTGQPSD. Positions 639-686 constitute a LysM 5 domain; that stretch reads EWDVVETGDTCGSLAESNDISLSQFFDWNPAVSRDCVANFWIGQAYCI.

The protein belongs to the secreted LysM effector family.

Functionally, might have a role in sequestration of chitin oligosaccharides (breakdown products of fungal cell walls that are released during invasion and act as triggers of host immunity) to dampen host defense. Does not play an important role during host colonization. This Verticillium dahliae (strain VdLs.17 / ATCC MYA-4575 / FGSC 10137) (Verticillium wilt) protein is Secreted LysM effector Vd5LysM.